A 283-amino-acid polypeptide reads, in one-letter code: 4-diphosphocytidyl-2-C-methyl-D-erythritol kinase (283 aa).

Lysine 13 is an active-site residue. 96–106 contributes to the ATP binding site; that stretch reads PMGGGIGGGSS. Aspartate 138 is an active-site residue.

This sequence belongs to the GHMP kinase family. IspE subfamily.

It catalyses the reaction 4-CDP-2-C-methyl-D-erythritol + ATP = 4-CDP-2-C-methyl-D-erythritol 2-phosphate + ADP + H(+). The protein operates within isoprenoid biosynthesis; isopentenyl diphosphate biosynthesis via DXP pathway; isopentenyl diphosphate from 1-deoxy-D-xylulose 5-phosphate: step 3/6. Its function is as follows. Catalyzes the phosphorylation of the position 2 hydroxy group of 4-diphosphocytidyl-2C-methyl-D-erythritol. The sequence is that of 4-diphosphocytidyl-2-C-methyl-D-erythritol kinase from Pseudomonas fluorescens (strain Pf0-1).